Reading from the N-terminus, the 123-residue chain is Signal recognition particle 14 kDa protein (123 aa).

The segment at 99 to 123 is disordered; it reads KKKPTPTTTPSSSTTAKTAAKKTKV. Over residues 103-116 the composition is skewed to low complexity; it reads TPTTTPSSSTTAKT.

Belongs to the SRP14 family. Heterodimer with srp9; binds RNA as heterodimer. Component of a signal recognition particle (SRP) complex that consists of a 7SL RNA molecule and six protein subunits: srp72, srp68, srp54, srp19, srp14 and srp9.

Its subcellular location is the cytoplasm. Component of the signal recognition particle (SRP) complex, a ribonucleoprotein complex that mediates the cotranslational targeting of secretory and membrane proteins to the endoplasmic reticulum (ER). Srp9 together with srp14 and the Alu portion of the SRP RNA, constitutes the elongation arrest domain of SRP. The complex of srp9 and srp14 is required for SRP RNA binding. The polypeptide is Signal recognition particle 14 kDa protein (srp14-1) (Dictyostelium discoideum (Social amoeba)).